A 587-amino-acid chain; its full sequence is ATP-dependent zinc metalloprotease FtsH 2 (587 aa).

The Cytoplasmic segment spans residues 1–12 (MSSDRTREVTKR). The helical transmembrane segment at 13-33 (ILMVLFGLWLLQFFFLPPLTT) threads the bilayer. Residues 34–102 (RPTELSYSAF…EQRYEVTRTP (69 aa)) lie on the Extracellular side of the membrane. The helical transmembrane segment at 103-123 (WWVTLLPTVLWLAVMVGLFAW) threads the bilayer. The Cytoplasmic portion of the chain corresponds to 124-587 (AQKRQAGAFG…GDDVRRILSA (464 aa)). Position 192 to 199 (192 to 199 (GPPGTGKT)) interacts with ATP. Histidine 416 is a binding site for Zn(2+). Glutamate 417 is a catalytic residue. Zn(2+) contacts are provided by histidine 420 and aspartate 492.

The protein in the central section; belongs to the AAA ATPase family. This sequence in the C-terminal section; belongs to the peptidase M41 family. Homohexamer. Zn(2+) serves as cofactor.

The protein localises to the cell membrane. In terms of biological role, acts as a processive, ATP-dependent zinc metallopeptidase for both cytoplasmic and membrane proteins. Plays a role in the quality control of integral membrane proteins. This is ATP-dependent zinc metalloprotease FtsH 2 from Symbiobacterium thermophilum (strain DSM 24528 / JCM 14929 / IAM 14863 / T).